The primary structure comprises 420 residues: Putative U-box domain-containing protein 58 (420 aa).

Positions 4–168 (NSYVLFARLC…EDALAMKKED (165 aa)) constitute an MIF4G domain. Positions 139–352 (SRVVELEGNY…TAKEQMEKRQ (214 aa)) form a coiled coil. The U-box domain maps to 352–420 (QPPSSFFCPI…ALRSAIEELV (69 aa)).

It catalyses the reaction S-ubiquitinyl-[E2 ubiquitin-conjugating enzyme]-L-cysteine + [acceptor protein]-L-lysine = [E2 ubiquitin-conjugating enzyme]-L-cysteine + N(6)-ubiquitinyl-[acceptor protein]-L-lysine.. It functions in the pathway protein modification; protein ubiquitination. Its function is as follows. Functions as an E3 ubiquitin ligase. This is Putative U-box domain-containing protein 58 (PUB58) from Arabidopsis thaliana (Mouse-ear cress).